Here is a 707-residue protein sequence, read N- to C-terminus: DNA ligase (707 aa).

Residues 36–40 (DADFD), 85–86 (SL), and Glu116 each bind NAD(+). The active-site N6-AMP-lysine intermediate is Lys118. Residues Arg139, Glu180, Lys298, and Lys322 each coordinate NAD(+). The Zn(2+) site is built by Cys416, Cys419, Cys434, and Cys440. The BRCT domain maps to 613–707 (AASSKIAGRS…STHVDPERMV (95 aa)).

Belongs to the NAD-dependent DNA ligase family. LigA subfamily. Requires Mg(2+) as cofactor. Mn(2+) serves as cofactor.

The catalysed reaction is NAD(+) + (deoxyribonucleotide)n-3'-hydroxyl + 5'-phospho-(deoxyribonucleotide)m = (deoxyribonucleotide)n+m + AMP + beta-nicotinamide D-nucleotide.. In terms of biological role, DNA ligase that catalyzes the formation of phosphodiester linkages between 5'-phosphoryl and 3'-hydroxyl groups in double-stranded DNA using NAD as a coenzyme and as the energy source for the reaction. It is essential for DNA replication and repair of damaged DNA. This Nitrosospira multiformis (strain ATCC 25196 / NCIMB 11849 / C 71) protein is DNA ligase.